A 126-amino-acid polypeptide reads, in one-letter code: Small ribosomal subunit protein uS12 (126 aa).

At Asp-89 the chain carries 3-methylthioaspartic acid.

It belongs to the universal ribosomal protein uS12 family. Part of the 30S ribosomal subunit. Contacts proteins S8 and S17. May interact with IF1 in the 30S initiation complex.

Functionally, with S4 and S5 plays an important role in translational accuracy. In terms of biological role, interacts with and stabilizes bases of the 16S rRNA that are involved in tRNA selection in the A site and with the mRNA backbone. Located at the interface of the 30S and 50S subunits, it traverses the body of the 30S subunit contacting proteins on the other side and probably holding the rRNA structure together. The combined cluster of proteins S8, S12 and S17 appears to hold together the shoulder and platform of the 30S subunit. In Carboxydothermus hydrogenoformans (strain ATCC BAA-161 / DSM 6008 / Z-2901), this protein is Small ribosomal subunit protein uS12.